The primary structure comprises 690 residues: MSCFSHVMNPITGQNSWQERGDDYDYHLEVANAGFGDMLHDWERNQKYFAALRKTIAGMREAGREVHVLDIGTGTGILSMMALAAGADSVTACEAFLPMANCAEKILAANGAGDKVRLIRKRSTEIQVGEDMPRKANLLVAELLDTELIGEGAIGIYNHAHAELLTEDALCIPARARCYAQVAQSPLAAQWNSLKTIANLDGEPLLHPPEQLKSCQGEAALHDVQLSQLPSSAFRPLTDPVEIFQFDFQRKQEREKQRSQLLKLQSKQPGAAELVFYWWDIQLDDDGEILLSCAPYWAHPQLKELAAEKAKDHPLPNVVPWRDHWMQAIYYIPKPLQLLEAGKSFHLSCHHDEYSLWFDAREEAPTKSVRRHTCTCDLHMTYSRSRIGQLNQSPRNKRYLRYLEESIEAEKSNVLVLGNGCLLGLASSALGAASVLLHEPHRFSRRLIESIVKHNQLKNVQFLDKVEELEDSRLAALTHIFAEPYFLNAILPWDNFYFGTLLTKIKDRLPEGVKISPCSARIYALPVEFLDLHKIRAPVGSCEGFDLRLFDEMVERSAEQAVSLVEAQPLWEYPCRALSEPQEVLSVDFSNFGQEHSLKGSIELKHPRICNGVALWVDWQLVEDNSPRSIVSSGPSEPVVPGEFVKWDMFVRQGVHFPRRPKEAITHLEWSTVFKPLLGELTFSFGQKKL.

2 SAM-dependent MTase PRMT-type domains span residues 14–357 (QNSW…YSLW) and 366–690 (TKSV…QKKL).

It belongs to the class I-like SAM-binding methyltransferase superfamily. Protein arginine N-methyltransferase family. PRMT7 subfamily. In terms of tissue distribution, expressed at low level in ovary.

Functionally, essential arginine methyltransferase that can both catalyze the formation of omega-N monomethylarginine (MMA) and symmetrical dimethylarginine (sDMA). Specifically mediates the symmetrical dimethylation of arginine residues in the small nuclear ribonucleoproteins SmD1 and SmD3. This chain is Protein arginine N-methyltransferase 7 (Art7), found in Drosophila melanogaster (Fruit fly).